The chain runs to 30 residues: Kappa-sparatoxin-Hv1d (30 aa).

3 disulfides stabilise this stretch: cysteine 3–cysteine 17, cysteine 10–cysteine 22, and cysteine 16–cysteine 26.

Expressed by the venom gland.

The protein resides in the secreted. In terms of biological role, inhibitor of voltage-gated potassium channels of the Kv4/KCND family. Blocks calcium channels (Cav). The protein is Kappa-sparatoxin-Hv1d of Heteropoda venatoria (Brown huntsman spider).